The chain runs to 250 residues: NAD(P)H-quinone oxidoreductase subunit K, chloroplastic (250 aa).

Cys-61, Cys-62, Cys-126, and Cys-157 together coordinate [4Fe-4S] cluster.

Belongs to the complex I 20 kDa subunit family. As to quaternary structure, NDH is composed of at least 16 different subunits, 5 of which are encoded in the nucleus. It depends on [4Fe-4S] cluster as a cofactor.

It localises to the plastid. The protein resides in the chloroplast thylakoid membrane. It carries out the reaction a plastoquinone + NADH + (n+1) H(+)(in) = a plastoquinol + NAD(+) + n H(+)(out). The catalysed reaction is a plastoquinone + NADPH + (n+1) H(+)(in) = a plastoquinol + NADP(+) + n H(+)(out). Its function is as follows. NDH shuttles electrons from NAD(P)H:plastoquinone, via FMN and iron-sulfur (Fe-S) centers, to quinones in the photosynthetic chain and possibly in a chloroplast respiratory chain. The immediate electron acceptor for the enzyme in this species is believed to be plastoquinone. Couples the redox reaction to proton translocation, and thus conserves the redox energy in a proton gradient. The chain is NAD(P)H-quinone oxidoreductase subunit K, chloroplastic from Angiopteris evecta (Mule's foot fern).